Reading from the N-terminus, the 188-residue chain is Proline-rich protein 3 (188 aa).

Residues 1–157 form a disordered region; sequence MPKRKKQNQH…DPQVMEDKSD (157 aa). Composition is skewed to pro residues over residues 35 to 46 and 69 to 82; these read IGPPSLLGPPPM and LIPP…PPWG. Low complexity predominate over residues 83–96; that stretch reads RGPIRRGLGPRSSP. A compositionally biased stretch (basic and acidic residues) spans 145-157; sequence PKDDPQVMEDKSD. A C3H1-type zinc finger spans residues 155-183; that stretch reads KSDRPVCRHFAKKGHCRYEDLCAFYHPGV.

This Pan troglodytes (Chimpanzee) protein is Proline-rich protein 3 (PRR3).